The primary structure comprises 225 residues: MKISGFVYLILITTIINLSFSEANNYCKIKCRSGIHTLCKFGISTKPNCGKNVVKGSGLTKAEKLEILKQHNEFRQKVARGLETRGKPGPQPPAKSMNTLVWNDELAQIAQVWASQCKYGHDDCRNTAKHSVGQNIAQQSTTAASFGSVSNMVQMWADEVKNYQYGSTKNKLIEVGHYTQMVWAKTKEIGCGSIKYIENGWHRHYLVCNYGPAGNIGNEPIYEKK.

Residues 1-23 (MKISGFVYLILITTIINLSFSEA) form the signal peptide. 4 cysteine pairs are disulfide-bonded: cysteine 27/cysteine 39, cysteine 31/cysteine 124, cysteine 49/cysteine 117, and cysteine 191/cysteine 208. Residues 69-210 (KQHNEFRQKV…WHRHYLVCNY (142 aa)) form the SCP domain.

The protein belongs to the CRISP family. Venom allergen 5-like subfamily. Expressed by the venom gland.

The protein resides in the secreted. The chain is Venom allergen 5 from Vespa magnifica (Hornet).